A 151-amino-acid polypeptide reads, in one-letter code: Neuroglobin (151 aa).

One can recognise a Globin domain in the interval 1-149 (MELPEPELIR…VVQAMSRGWG (149 aa)). His64 and His96 together coordinate heme b.

This sequence belongs to the globin family. As to quaternary structure, monomer. Homodimer and homotetramer; disulfide-linked. Mainly monomeric but also detected as part of homodimers and homotetramers. Interacts with 14-3-3 proteins; regulates the phosphorylation of NGB. Could interact (ferrous form) with G-alpha(i) proteins (GTP-bound form). In terms of processing, phosphorylated during hypoxia by ERK1/ERK2. Phosphorylation regulates the heme pocket hexacoordination preventing the association of His-64 with the heme metal center. Thereby, promotes the access of dioxygen and nitrite to the heme and stimulates the nitrite reductase activity. Phosphorylation during hypoxia is stabilized by 14-3-3 proteins.

The protein resides in the cytoplasm. The protein localises to the cytosol. It localises to the mitochondrion matrix. The enzyme catalyses Fe(III)-heme b-[protein] + nitric oxide + H2O = Fe(II)-heme b-[protein] + nitrite + 2 H(+). Monomeric globin with a bis-histidyl six-coordinate heme-iron atom through which it can bind dioxygen, carbon monoxide and nitric oxide. Could help transport oxygen and increase its availability to the metabolically active neuronal tissues, though its low quantity in tissues as well as its high affinity for dioxygen, which may limit its oxygen-releasing ability, argue against it. The ferrous/deoxygenated form exhibits a nitrite reductase activity and it could produce nitric oxide which in turn inhibits cellular respiration in response to hypoxia. In its ferrous/deoxygenated state, it may also exhibit GDI (Guanine nucleotide Dissociation Inhibitor) activity toward heterotrimeric G-alpha proteins, thereby regulating signal transduction to facilitate neuroprotective responses in the wake of hypoxia and associated oxidative stress. In Bos taurus (Bovine), this protein is Neuroglobin.